A 355-amino-acid polypeptide reads, in one-letter code: 3-dehydroquinate synthase (355 aa).

NAD(+)-binding positions include 105–109 (GVVGD), 129–130 (TS), Lys142, Lys151, and 169–172 (TLKT). Zn(2+) is bound by residues Glu184, His246, and His263.

Belongs to the sugar phosphate cyclases superfamily. Dehydroquinate synthase family. NAD(+) serves as cofactor. The cofactor is Co(2+). Requires Zn(2+) as cofactor.

The protein localises to the cytoplasm. It carries out the reaction 7-phospho-2-dehydro-3-deoxy-D-arabino-heptonate = 3-dehydroquinate + phosphate. It participates in metabolic intermediate biosynthesis; chorismate biosynthesis; chorismate from D-erythrose 4-phosphate and phosphoenolpyruvate: step 2/7. In terms of biological role, catalyzes the conversion of 3-deoxy-D-arabino-heptulosonate 7-phosphate (DAHP) to dehydroquinate (DHQ). The chain is 3-dehydroquinate synthase from Streptococcus agalactiae serotype III (strain NEM316).